The sequence spans 153 residues: Regulatory protein RecX (153 aa).

This sequence belongs to the RecX family.

It is found in the cytoplasm. Functionally, modulates RecA activity. The protein is Regulatory protein RecX of Mannheimia succiniciproducens (strain KCTC 0769BP / MBEL55E).